A 128-amino-acid polypeptide reads, in one-letter code: Lysozyme C-1 (128 aa).

The region spanning 1 to 128 (KVYDRCEFAR…VSQYIRGCKL (128 aa)) is the C-type lysozyme domain. 4 disulfides stabilise this stretch: C6–C126, C30–C114, C63–C79, and C75–C93. Catalysis depends on residues E35 and D51.

Belongs to the glycosyl hydrolase 22 family. As to quaternary structure, monomer.

It localises to the secreted. The enzyme catalyses Hydrolysis of (1-&gt;4)-beta-linkages between N-acetylmuramic acid and N-acetyl-D-glucosamine residues in a peptidoglycan and between N-acetyl-D-glucosamine residues in chitodextrins.. Functionally, lysozymes have primarily a bacteriolytic function; those in tissues and body fluids are associated with the monocyte-macrophage system and enhance the activity of immunoagents. The chain is Lysozyme C-1 from Sus scrofa (Pig).